We begin with the raw amino-acid sequence, 638 residues long: 1-deoxy-D-xylulose-5-phosphate synthase (638 aa).

Residues H76 and A117–S119 contribute to the thiamine diphosphate site. D148 is a Mg(2+) binding site. Thiamine diphosphate contacts are provided by residues G149–S150, N177, Y287, and E369. N177 lines the Mg(2+) pocket.

Belongs to the transketolase family. DXPS subfamily. As to quaternary structure, homodimer. The cofactor is Mg(2+). Thiamine diphosphate serves as cofactor.

The catalysed reaction is D-glyceraldehyde 3-phosphate + pyruvate + H(+) = 1-deoxy-D-xylulose 5-phosphate + CO2. Its pathway is metabolic intermediate biosynthesis; 1-deoxy-D-xylulose 5-phosphate biosynthesis; 1-deoxy-D-xylulose 5-phosphate from D-glyceraldehyde 3-phosphate and pyruvate: step 1/1. Functionally, catalyzes the acyloin condensation reaction between C atoms 2 and 3 of pyruvate and glyceraldehyde 3-phosphate to yield 1-deoxy-D-xylulose-5-phosphate (DXP). This chain is 1-deoxy-D-xylulose-5-phosphate synthase, found in Rhodopseudomonas palustris (strain BisB5).